Here is a 313-residue protein sequence, read N- to C-terminus: Protein ABA AND ROS SENSITIVE 1 (313 aa).

Residues 5-12 (AKKKAMFR) carry the Nuclear localization signal 1 motif. The C2H2-type zinc-finger motif lies at 39-61 (CRVCNVVLKSESLWDVHQASRKH). Residues 115–131 (ARAEVEPAKSKNLEQSK) are compositionally biased toward basic and acidic residues. Disordered stretches follow at residues 115–189 (ARAE…LPTG), 232–254 (MEEEEVDAAETIEEEEQREQRSY), and 271–313 (ARLA…AQHL). Residues 155–176 (TDSSNTKTTSEPKQSQTQTTGP) are compositionally biased toward polar residues. Positions 232–248 (MEEEEVDAAETIEEEEQ) are enriched in acidic residues. The stretch at 232-271 (MEEEEVDAAETIEEEEQREQRSYKEKVEILKRKKMELKAA) forms a coiled coil. A Nuclear localization signal 2 motif is present at residues 274–281 (AKRSKTSE). Acidic residues predominate over residues 293 to 305 (ESPSDEEDDEDSA).

Mostly expressed in siliques and, to a lower extent, in roots. Barely deteclable in leaves and stems.

The protein resides in the nucleus. Its subcellular location is the cytoplasm. Its function is as follows. Essential for breaking seed dormancy before seed germination. Prevents reactive oxygen species (ROS) accumulation in response to abscisic acid (ABA) and oxidative stress, probably by repressing the accumulation of ABA-induced ROS-scavenging enzymes (e.g. CSD3). This chain is Protein ABA AND ROS SENSITIVE 1, found in Arabidopsis thaliana (Mouse-ear cress).